A 623-amino-acid polypeptide reads, in one-letter code: uncharacterized protein (623 aa).

Positions 24–51 form a coiled coil; it reads RALVQKDELAQASQDVEDMRDCYDSLLN. Disordered regions lie at residues 148 to 170, 240 to 343, 362 to 393, 454 to 531, and 585 to 607; these read TRQREKGRSKGGKGETFSPQQLQ, FSGL…TTPP, ALPTPVETTRSPSSTTSPGHKNVGSSNPTKAI, SFSG…LGYS, and KKLGTPSPPLTPMSLIHPPPQAL. Residues 243–259 are compositionally biased toward acidic residues; sequence LEDDDGDDEIENNENDG. Polar residues predominate over residues 328–343; the sequence is VSQSAPLFPENRTTPP. The span at 364 to 379 shows a compositional bias: low complexity; sequence PTPVETTRSPSSTTSP. The span at 384-393 shows a compositional bias: polar residues; that stretch reads VGSSNPTKAI. A compositionally biased stretch (low complexity) spans 484-495; the sequence is PVSKLPKVSSSP. The span at 496-506 shows a compositional bias: polar residues; it reads TASPTFVSTPK. Residues 590–606 show a composition bias toward pro residues; the sequence is PSPPLTPMSLIHPPPQA.

This is an uncharacterized protein from Arabidopsis thaliana (Mouse-ear cress).